Here is a 338-residue protein sequence, read N- to C-terminus: Lipoyl synthase (338 aa).

A disordered region spans residues 1-24 (MTTVQEAVPNLIPTQDATPRPAPK). C84, C89, C95, C110, C114, C117, and S324 together coordinate [4Fe-4S] cluster. The 218-residue stretch at 96–313 (FSGGTATFMI…AEEGYKMGFK (218 aa)) folds into the Radical SAM core domain.

It belongs to the radical SAM superfamily. Lipoyl synthase family. [4Fe-4S] cluster is required as a cofactor.

The protein resides in the cytoplasm. The catalysed reaction is [[Fe-S] cluster scaffold protein carrying a second [4Fe-4S](2+) cluster] + N(6)-octanoyl-L-lysyl-[protein] + 2 oxidized [2Fe-2S]-[ferredoxin] + 2 S-adenosyl-L-methionine + 4 H(+) = [[Fe-S] cluster scaffold protein] + N(6)-[(R)-dihydrolipoyl]-L-lysyl-[protein] + 4 Fe(3+) + 2 hydrogen sulfide + 2 5'-deoxyadenosine + 2 L-methionine + 2 reduced [2Fe-2S]-[ferredoxin]. It participates in protein modification; protein lipoylation via endogenous pathway; protein N(6)-(lipoyl)lysine from octanoyl-[acyl-carrier-protein]: step 2/2. Functionally, catalyzes the radical-mediated insertion of two sulfur atoms into the C-6 and C-8 positions of the octanoyl moiety bound to the lipoyl domains of lipoate-dependent enzymes, thereby converting the octanoylated domains into lipoylated derivatives. In Pseudomonas putida (strain ATCC 700007 / DSM 6899 / JCM 31910 / BCRC 17059 / LMG 24140 / F1), this protein is Lipoyl synthase.